A 590-amino-acid polypeptide reads, in one-letter code: tRNA-guanine(15) transglycosylase (590 aa).

The active-site Nucleophile is the aspartate 90. Residue aspartate 125 coordinates substrate. 3 residues coordinate Zn(2+): cysteine 278, cysteine 280, and cysteine 283. Residues 502 to 577 (KGRVVVKGLF…HPFIIIRRHV (76 aa)) form the PUA domain.

Belongs to the archaeosine tRNA-ribosyltransferase family. It depends on Zn(2+) as a cofactor.

The enzyme catalyses guanosine(15) in tRNA + 7-cyano-7-deazaguanine = 7-cyano-7-carbaguanosine(15) in tRNA + guanine. It functions in the pathway tRNA modification; archaeosine-tRNA biosynthesis. Exchanges the guanine residue with 7-cyano-7-deazaguanine (preQ0) at position 15 in the dihydrouridine loop (D-loop) of archaeal tRNAs. The polypeptide is tRNA-guanine(15) transglycosylase (Korarchaeum cryptofilum (strain OPF8)).